Consider the following 235-residue polypeptide: Phosphoribosylaminoimidazole-succinocarboxamide synthase (235 aa).

The protein belongs to the SAICAR synthetase family.

The enzyme catalyses 5-amino-1-(5-phospho-D-ribosyl)imidazole-4-carboxylate + L-aspartate + ATP = (2S)-2-[5-amino-1-(5-phospho-beta-D-ribosyl)imidazole-4-carboxamido]succinate + ADP + phosphate + 2 H(+). It functions in the pathway purine metabolism; IMP biosynthesis via de novo pathway; 5-amino-1-(5-phospho-D-ribosyl)imidazole-4-carboxamide from 5-amino-1-(5-phospho-D-ribosyl)imidazole-4-carboxylate: step 1/2. The chain is Phosphoribosylaminoimidazole-succinocarboxamide synthase from Streptococcus thermophilus (strain CNRZ 1066).